Consider the following 312-residue polypeptide: Pyridoxal kinase (312 aa).

Methionine 1 is subject to N-acetylmethionine. Pyridoxal is bound by residues serine 12 and threonine 47. Residue threonine 47 coordinates pyridoxal 5'-phosphate. Serine 59 is modified (phosphoserine). Aspartate 113 provides a ligand contact to ATP. Residue aspartate 113 participates in Na(+) binding. Mg(2+) is bound at residue aspartate 118. Threonine 148 provides a ligand contact to Na(+). Residue 150 to 153 (NQFE) participates in ATP binding. At serine 164 the chain carries Phosphoserine. Residue threonine 186 coordinates Na(+). 186 to 187 (TS) lines the ATP pocket. Serine 213 bears the Phosphoserine mark. ATP contacts are provided by residues 226 to 228 (VEA) and threonine 233. Position 234-235 (234-235 (GD)) interacts with pyridoxal 5'-phosphate. The active-site Proton acceptor is aspartate 235. Position 285 is a phosphoserine (serine 285).

This sequence belongs to the pyridoxine kinase family. Homodimer. Zn(2+) is required as a cofactor. Mg(2+) serves as cofactor.

The protein resides in the cytoplasm. It localises to the cytosol. It carries out the reaction pyridoxal + ATP = pyridoxal 5'-phosphate + ADP + H(+). The catalysed reaction is pyridoxamine + ATP = pyridoxamine 5'-phosphate + ADP + H(+). The enzyme catalyses pyridoxine + ATP = pyridoxine 5'-phosphate + ADP + H(+). Its pathway is cofactor metabolism; pyridoxal 5'-phosphate salvage; pyridoxal 5'-phosphate from pyridoxal: step 1/1. It functions in the pathway cofactor metabolism; pyridoxal 5'-phosphate salvage; pyridoxine 5'-phosphate from pyridoxine: step 1/1. It participates in cofactor metabolism; pyridoxal 5'-phosphate salvage; pyridoxamine 5'-phosphate from pyridoxamine: step 1/1. Activity is increased in the presence of K(+)or Na(+). Its function is as follows. Catalyzes the phosphorylation of the dietary vitamin B6 vitamers pyridoxal (PL), pyridoxine (PN) and pyridoxamine (PM) to form pyridoxal 5'-phosphate (PLP), pyridoxine 5'-phosphate (PNP) and pyridoxamine 5'-phosphate (PMP), respectively. PLP is the active form of vitamin B6, and acts as a cofactor for over 140 different enzymatic reactions. In Mus musculus (Mouse), this protein is Pyridoxal kinase.